The chain runs to 178 residues: Large ribosomal subunit protein uL6 (178 aa).

Basic and acidic residues predominate over residues 155–169 (PYKGKGIKYDNEQIR). The disordered stretch occupies residues 155–178 (PYKGKGIKYDNEQIRRKAGKSGGK).

This sequence belongs to the universal ribosomal protein uL6 family. As to quaternary structure, part of the 50S ribosomal subunit.

Functionally, this protein binds to the 23S rRNA, and is important in its secondary structure. It is located near the subunit interface in the base of the L7/L12 stalk, and near the tRNA binding site of the peptidyltransferase center. This Nitratidesulfovibrio vulgaris (strain DSM 19637 / Miyazaki F) (Desulfovibrio vulgaris) protein is Large ribosomal subunit protein uL6.